A 697-amino-acid chain; its full sequence is Protein Niban 3 (697 aa).

The tract at residues 1–48 is disordered; that stretch reads MGPDRKEVPLSRGTQAVVVGKGRGAPGDDSSMGGRPSSPLDKQQRQHL.

It belongs to the Niban family. Specifically expressed in B-lymphocytes.

The sequence is that of Protein Niban 3 from Homo sapiens (Human).